Here is a 209-residue protein sequence, read N- to C-terminus: Small ribosomal subunit protein uS4 (209 aa).

Residues 99–162 (RRLDNMVYRL…RKNNKIIEAM (64 aa)) form the S4 RNA-binding domain.

It belongs to the universal ribosomal protein uS4 family. Part of the 30S ribosomal subunit. Contacts protein S5. The interaction surface between S4 and S5 is involved in control of translational fidelity.

Functionally, one of the primary rRNA binding proteins, it binds directly to 16S rRNA where it nucleates assembly of the body of the 30S subunit. In terms of biological role, with S5 and S12 plays an important role in translational accuracy. The polypeptide is Small ribosomal subunit protein uS4 (Syntrophus aciditrophicus (strain SB)).